The following is a 553-amino-acid chain: Serine protease 53 (553 aa).

An N-terminal signal peptide occupies residues 1–23; sequence MKWCWGPVLLIAGATVLMEGLQA. Peptidase S1 domains follow at residues 24–273 and 294–526; these read AQRA…ARVQ and VACG…SLDW. A disordered region spans residues 27 to 46; the sequence is ACGQRGPGPPKPQEGNTVPG. Cysteines 62 and 78 form a disulfide. Catalysis depends on charge relay system residues histidine 77 and aspartate 128. Intrachain disulfides connect cysteine 158-cysteine 230, cysteine 187-cysteine 209, cysteine 220-cysteine 249, and cysteine 326-cysteine 342. Catalysis depends on charge relay system residues serine 224, histidine 341, and aspartate 382. Intrachain disulfides connect cysteine 444-cysteine 464 and cysteine 474-cysteine 502. The Charge relay system role is filled by serine 478.

The protein belongs to the peptidase S1 family. Predominantly detected in testis, liver, heart and ovary, as well as in several tumor cell lines.

It localises to the secreted. In vitro can degrade the fibrinogen alpha chain of as well as pro-urokinase-type plasminogen activator. The chain is Serine protease 53 (PRSS53) from Homo sapiens (Human).